Consider the following 66-residue polypeptide: Potassium channel toxin alpha-KTx 27.3 (66 aa).

Residues 1–17 form the signal peptide; that stretch reads MKLMWLLFLCVLAFSIA.

Belongs to the short scorpion toxin superfamily. Potassium channel inhibitor family. Alpha-KTx 27 subfamily. Contains 4 disulfide bonds. Expressed by the venom gland.

Its subcellular location is the secreted. The sequence is that of Potassium channel toxin alpha-KTx 27.3 from Lychas mucronatus (Chinese swimming scorpion).